Reading from the N-terminus, the 272-residue chain is Acetylglutamate kinase (272 aa).

Residues 41–42 (GG), Arg-63, and Asn-166 contribute to the substrate site.

The protein belongs to the acetylglutamate kinase family. ArgB subfamily.

The protein localises to the cytoplasm. The catalysed reaction is N-acetyl-L-glutamate + ATP = N-acetyl-L-glutamyl 5-phosphate + ADP. It participates in amino-acid biosynthesis; L-arginine biosynthesis; N(2)-acetyl-L-ornithine from L-glutamate: step 2/4. Its function is as follows. Catalyzes the ATP-dependent phosphorylation of N-acetyl-L-glutamate. In Anaeromyxobacter sp. (strain K), this protein is Acetylglutamate kinase.